The chain runs to 219 residues: Redox-sensing transcriptional repressor Rex (219 aa).

A DNA-binding region (H-T-H motif) is located at residues 17–56; that stretch reads RYLRYVEDLLNHDIMRISSSELSQRMGYTASQVRQDFNNF. 91–96 is a binding site for NAD(+); it reads GVGNLG.

The protein belongs to the transcriptional regulatory Rex family. As to quaternary structure, homodimer.

The protein resides in the cytoplasm. Modulates transcription in response to changes in cellular NADH/NAD(+) redox state. The sequence is that of Redox-sensing transcriptional repressor Rex from Caldicellulosiruptor saccharolyticus (strain ATCC 43494 / DSM 8903 / Tp8T 6331).